The primary structure comprises 411 residues: UPF0754 membrane protein Npun_R4433 (411 aa).

A run of 2 helical transmembrane segments spans residues 3 to 23 and 387 to 407; these read WSHLWLYVSPPVLGGIIGYFT and IVTLGGVLGFVIGLLQTVFLV.

Belongs to the UPF0754 family.

The protein resides in the cell inner membrane. The polypeptide is UPF0754 membrane protein Npun_R4433 (Nostoc punctiforme (strain ATCC 29133 / PCC 73102)).